The primary structure comprises 330 residues: ADP-L-glycero-D-manno-heptose-6-epimerase (330 aa).

Residues 11-12, 32-33, K39, K54, 75-79, and N92 contribute to the NADP(+) site; these read FI, DN, and EGACS. Y139 serves as the catalytic Proton acceptor. Residue K143 participates in NADP(+) binding. N168 contacts substrate. NADP(+) is bound by residues V169 and K177. Residue K177 is the Proton acceptor of the active site. Residues R179, H186, 200-203, R213, and Y292 each bind substrate; that span reads FGEY.

The protein belongs to the NAD(P)-dependent epimerase/dehydratase family. HldD subfamily. As to quaternary structure, homopentamer. NADP(+) is required as a cofactor.

It catalyses the reaction ADP-D-glycero-beta-D-manno-heptose = ADP-L-glycero-beta-D-manno-heptose. Its pathway is nucleotide-sugar biosynthesis; ADP-L-glycero-beta-D-manno-heptose biosynthesis; ADP-L-glycero-beta-D-manno-heptose from D-glycero-beta-D-manno-heptose 7-phosphate: step 4/4. Functionally, catalyzes the interconversion between ADP-D-glycero-beta-D-manno-heptose and ADP-L-glycero-beta-D-manno-heptose via an epimerization at carbon 6 of the heptose. The sequence is that of ADP-L-glycero-D-manno-heptose-6-epimerase from Burkholderia cenocepacia (strain ATCC BAA-245 / DSM 16553 / LMG 16656 / NCTC 13227 / J2315 / CF5610) (Burkholderia cepacia (strain J2315)).